The sequence spans 930 residues: MKLKETLNLGKTAFPMRAGLPNKEPIWQKEWDQAKLYQRRQELNEGKPHFILHDGPPYANGNIHVGHAMNKISKDIIVRSKSMAGYYAPYIPGWDTHGLPIEQVLAKQGVKRKELDLVEYLNMCRDYALSQVEKQKEDFKRLGVSGDWENPYVTLTPDYEAAQIRVFGEMAKKGYIYRGAKPVYWSWSSESALAEAEIEYHDLVSTSLYYANRVKDGKGVLDTDTYIVVWTTTPFTITASRGLTVGADIDYVVVQPAGESRKFVVASELLNSLSEKFGWADVQVLATYRGQELNHIVTVHPWDTAVDELVILGDHVTTDSGTGIVHTAPGFGEDDYNVGVANDLEVFVTVNERGIMMENAGPDFAGQFYDKVAPTVIEKLGDLLLAQEEISHSYPFDWRTKKPIIWRAVPQWFASVSKFRQEILDEIEKVKFHSEWGKVRLYNMIRDRGDWVISRQRAWGVPLPIFYAEDGTPIMTAETIEHVAQLFEEHGSIVWWKREAKDLLPEGFTHPGSPNGEFTKETDIMDVWFDSGSSWNGVVVNRPELTYPADLYLEGSDQYRGWFNSSLITSVANHGVAPYKQILSQGFALDGKGEKMSKSLGNTIAPSDVEKQFGAEILRLWVTSVDSSNDVRISMDILSQVSETYRKIRNTLRFLIANTSDFNPVEDAVAYEELRSVDKYMTIRFNQLVETIRKAYADFEFLTIYKAIVNFVTVDLSAFYLDFAKDIVYIEAAKSLERRQMQTVFYDVLVKITKLLTPILPHTAEEIWSYLEHEEEEFVQLSELPEAQTFPNQEEILDTWSAFMDFRSQAQKALEEARNEKVIGKSLEAHLTVYPNEVIKTLLEAVNSDVAQLLIVSQLTIAEGPAPEGALVFEDVAFVVEHAQGQVCDRCRRIDTTVQERSYQALVCDHCAEILEENFAQAVSEGFEAN.

The short motif at 57-67 is the 'HIGH' region element; it reads PYANGNIHVGH. Glutamate 554 provides a ligand contact to L-isoleucyl-5'-AMP. The short motif at 595–599 is the 'KMSKS' region element; that stretch reads KMSKS. Lysine 598 lines the ATP pocket. Cysteine 888, cysteine 891, cysteine 908, and cysteine 911 together coordinate Zn(2+).

This sequence belongs to the class-I aminoacyl-tRNA synthetase family. IleS type 1 subfamily. Monomer. It depends on Zn(2+) as a cofactor.

The protein localises to the cytoplasm. The enzyme catalyses tRNA(Ile) + L-isoleucine + ATP = L-isoleucyl-tRNA(Ile) + AMP + diphosphate. Its function is as follows. Catalyzes the attachment of isoleucine to tRNA(Ile). As IleRS can inadvertently accommodate and process structurally similar amino acids such as valine, to avoid such errors it has two additional distinct tRNA(Ile)-dependent editing activities. One activity is designated as 'pretransfer' editing and involves the hydrolysis of activated Val-AMP. The other activity is designated 'posttransfer' editing and involves deacylation of mischarged Val-tRNA(Ile). This Streptococcus sanguinis (strain SK36) protein is Isoleucine--tRNA ligase.